A 44-amino-acid chain; its full sequence is Cytochrome b559 subunit beta (44 aa).

The helical transmembrane segment at 17-41 threads the bilayer; sequence VRWLAVHTLAVPSVFFVGAIAAMQF. Positions 18 and 23 each coordinate heme.

The protein belongs to the PsbE/PsbF family. In terms of assembly, heterodimer of an alpha subunit and a beta subunit. PSII is composed of 1 copy each of membrane proteins PsbA, PsbB, PsbC, PsbD, PsbE, PsbF, PsbH, PsbI, PsbJ, PsbK, PsbL, PsbM, PsbT, PsbX, PsbY, PsbZ, Psb30/Ycf12, peripheral proteins PsbO, CyanoQ (PsbQ), PsbU, PsbV and a large number of cofactors. It forms dimeric complexes. Heme b is required as a cofactor.

It is found in the cellular thylakoid membrane. This b-type cytochrome is tightly associated with the reaction center of photosystem II (PSII). PSII is a light-driven water:plastoquinone oxidoreductase that uses light energy to abstract electrons from H(2)O, generating O(2) and a proton gradient subsequently used for ATP formation. It consists of a core antenna complex that captures photons, and an electron transfer chain that converts photonic excitation into a charge separation. The polypeptide is Cytochrome b559 subunit beta (Synechocystis sp. (strain ATCC 27184 / PCC 6803 / Kazusa)).